Consider the following 285-residue polypeptide: Pantothenate synthetase (285 aa).

Residue 32–39 participates in ATP binding; it reads MGALHDGH. The Proton donor role is filled by histidine 39. (R)-pantoate is bound at residue glutamine 63. A beta-alanine-binding site is contributed by glutamine 63. 149–152 provides a ligand contact to ATP; sequence GEKD. (R)-pantoate is bound at residue glutamine 155. Residues valine 178 and 186 to 189 contribute to the ATP site; that span reads MSSR.

It belongs to the pantothenate synthetase family. As to quaternary structure, homodimer.

It localises to the cytoplasm. The catalysed reaction is (R)-pantoate + beta-alanine + ATP = (R)-pantothenate + AMP + diphosphate + H(+). Its pathway is cofactor biosynthesis; (R)-pantothenate biosynthesis; (R)-pantothenate from (R)-pantoate and beta-alanine: step 1/1. Catalyzes the condensation of pantoate with beta-alanine in an ATP-dependent reaction via a pantoyl-adenylate intermediate. This Ruegeria pomeroyi (strain ATCC 700808 / DSM 15171 / DSS-3) (Silicibacter pomeroyi) protein is Pantothenate synthetase.